Here is an 813-residue protein sequence, read N- to C-terminus: Protein SBE22 (813 aa).

Disordered stretches follow at residues 1–66 (MIRP…HGHA), 107–240 (EIFS…GEFG), and 331–359 (QKDS…NRES). A compositionally biased stretch (basic and acidic residues) spans 56–66 (RPSDNLFHGHA). Over residues 107–121 (EIFSTSSSDTQSNIS) the composition is skewed to low complexity. Positions 127–138 (SEDHSFGMDKSV) are enriched in basic and acidic residues. Polar residues-rich tracts occupy residues 139-160 (DNSS…NGDS), 169-200 (VSVN…NRSM), and 214-234 (KNSS…NRSV).

Belongs to the SBE2 family.

It is found in the cytoplasm. It localises to the golgi apparatus. Its function is as follows. With SBE2, is involved in cell wall integrity and polarity processes like bud growth. This chain is Protein SBE22 (SBE22), found in Candida glabrata (strain ATCC 2001 / BCRC 20586 / JCM 3761 / NBRC 0622 / NRRL Y-65 / CBS 138) (Yeast).